The sequence spans 177 residues: Large ribosomal subunit protein uL5m (177 aa).

This sequence belongs to the universal ribosomal protein uL5 family.

It is found in the mitochondrion. In Acanthamoeba castellanii (Amoeba), this protein is Large ribosomal subunit protein uL5m (RPL5).